The following is a 64-amino-acid chain: Large ribosomal subunit protein uL29 (64 aa).

The protein belongs to the universal ribosomal protein uL29 family.

The chain is Large ribosomal subunit protein uL29 from Solidesulfovibrio magneticus (strain ATCC 700980 / DSM 13731 / RS-1) (Desulfovibrio magneticus).